We begin with the raw amino-acid sequence, 113 residues long: Nucleoid-associated protein THA_1374 (113 aa).

The protein belongs to the YbaB/EbfC family. In terms of assembly, homodimer.

Its subcellular location is the cytoplasm. The protein resides in the nucleoid. In terms of biological role, binds to DNA and alters its conformation. May be involved in regulation of gene expression, nucleoid organization and DNA protection. This Thermosipho africanus (strain TCF52B) protein is Nucleoid-associated protein THA_1374.